We begin with the raw amino-acid sequence, 392 residues long: N-acetylneuraminate epimerase (392 aa).

Positions 1–35 (MTQLYPQYKKQLTTKIVLFSALSLLMMASLPNTYA) are cleaved as a signal peptide. Kelch repeat units follow at residues 56–100 (SLYV…VVLA), 102–155 (KLYV…TTLD), 157–192 (SQAVLLGGVNKAIFDGYFTDLASAGSDEVRKSAVIN), 193–238 (AYFN…SRMD), 241–290 (LILI…LAGA), 312–361 (KQFN…QGPD), and 363–392 (VILIGGETTGGTATSAVTQLSWQGGKLHIE). The Proton acceptor role is filled by Glu-247.

This sequence belongs to the NanM family. As to quaternary structure, homodimer.

It is found in the periplasm. The enzyme catalyses N-acetyl-alpha-neuraminate = N-acetyl-beta-neuraminate. In terms of biological role, converts alpha-N-acetylneuranimic acid (Neu5Ac) to the beta-anomer, accelerating the equilibrium between the alpha- and beta-anomers. Probably facilitates sialidase-negative bacteria to compete successfully for limited amounts of extracellular Neu5Ac, which is likely taken up in the beta-anomer. In addition, the rapid removal of sialic acid from solution might be advantageous to the bacterium to damp down host responses. The protein is N-acetylneuraminate epimerase of Yersinia pseudotuberculosis serotype O:1b (strain IP 31758).